The sequence spans 878 residues: MATAPSYPAGLPGSPGPGSPPPPGGLELQSPPPLLPQIPAPGSGVSFHIQIGLTREFVLLPAASELAHVKQLACSIVDQKFPECGFYGLYDKILLFKHDPTSANLLQLVRSSGDIQEGDLVEVVLSASATFEDFQIRPHALTVHSYRAPAFCDHCGEMLFGLVRQGLKCDGCGLNYHKRCAFSIPNNCSGARKRRLSSTSLASGHSVRLGTSESLPCTAEELSRSTTELLPRRPPSSSSSSSASSYTGRPIELDKMLLSKVKVPHTFLIHSYTRPTVCQACKKLLKGLFRQGLQCKDCKFNCHKRCATRVPNDCLGEALINGDVPMEEATDFSEADKSALMDESEDSGVIPGSHSENALHASEEEEGEGGKAQSSLGYIPLMRVVQSVRHTTRKSSTTLREGWVVHYSNKDTLRKRHYWRLDCKCITLFQNNTTNRYYKEIPLSEILTVESAQNFSLVPPGTNPHCFEIVTANATYFVGEMPGGTPGGPSGQGAEAARGWETAIRQALMPVILQDAPSAPGHAPHRQASLSISVSNSQIQENVDIATVYQIFPDEVLGSGQFGVVYGGKHRKTGRDVAVKVIDKLRFPTKQESQLRNEVAILQSLRHPGIVNLECMFETPEKVFVVMEKLHGDMLEMILSSEKGRLPERLTKFLITQILVALRHLHFKNIVHCDLKPENVLLASADPFPQVKLCDFGFARIIGEKSFRRSVVGTPAYLAPEVLLNQGYNRSLDMWSVGVIMYVSLSGTFPFNEDEDINDQIQNAAFMYPASPWSHISAGAIDLINNLLQVKMRKRYSVDKSLSHPWLQEYQTWLDLRELEGKMGERYITHESDDARWEQFAAEHPLPGSGLPTDRDLGGACPPQDHDMQGLAERISVL.

Low complexity predominate over residues 1-12 (MATAPSYPAGLP). Residues 1–35 (MATAPSYPAGLPGSPGPGSPPPPGGLELQSPPPLL) form a disordered region. Pro residues predominate over residues 14-35 (SPGPGSPPPPGGLELQSPPPLL). Residue S30 is modified to Phosphoserine. Position 87 is a phosphotyrosine (Y87). Residues 138–188 (PHALTVHSYRAPAFCDHCGEMLFGLVRQGLKCDGCGLNYHKRCAFSIPNNC) form a Phorbol-ester/DAG-type 1 zinc finger. Phosphoserine is present on residues S197, S198, S200, S203, S206, S212, and S214. Residues 224–247 (RSTTELLPRRPPSSSSSSSASSYT) are disordered. The segment covering 236–245 (SSSSSSSASS) has biased composition (low complexity). The residue at position 244 (S244) is a Phosphoserine; by CSNK1D and CSNK1E. A Phorbol-ester/DAG-type 2 zinc finger spans residues 264–314 (PHTFLIHSYTRPTVCQACKKLLKGLFRQGLQCKDCKFNCHKRCATRVPNDC). Residues 343 to 373 (ESEDSGVIPGSHSENALHASEEEEGEGGKAQ) form a disordered region. In terms of domain architecture, PH spans 397–509 (TTLREGWVVH…WETAIRQALM (113 aa)). Y407 bears the Phosphotyrosine mark. Phosphotyrosine; by ABL1 is present on Y438. S518 is modified (phosphoserine). One can recognise a Protein kinase domain in the interval 551-807 (IFPDEVLGSG…VDKSLSHPWL (257 aa)). ATP contacts are provided by residues 557-565 (LGSGQFGVV) and K580. D674 acts as the Proton acceptor in catalysis. S706 bears the Phosphoserine; by PKC mark. Position 710 is a phosphoserine (S710). Y717 carries the post-translational modification Phosphotyrosine; by ABL1. The Important for ABL1-mediated Tyr-717 phosphorylation signature appears at 724 to 726 (LNQ). The tract at residues 844–869 (HPLPGSGLPTDRDLGGACPPQDHDMQ) is disordered. S876 carries the phosphoserine; by autocatalysis modification.

The protein belongs to the protein kinase superfamily. CAMK Ser/Thr protein kinase family. PKD subfamily. Interacts (via C-terminus) with LCK. Interacts (via N-terminal AP-rich region) with CIB1 isoform 2. Interacts (via N-terminus and zing-finger domain 1 and 2) with PRKCD in response to oxidative stress; the interaction is independent of PRKD2 tyrosine phosphorylation. It depends on Mg(2+) as a cofactor. In terms of processing, phosphorylation of Ser-876 correlates with the activation status of the kinase. Ser-706 or/and Ser-710 are probably phosphorylated by PKC. Phosphorylation at Ser-244 by CSNK1D and CSNK1E promotes nuclear localization and substrate targeting. Phosphorylation at Ser-244, Ser-706 and Ser-710 is required for nuclear localization. Phosphorylated at Tyr-438 by ABL1 in response to oxidative stress. Phosphorylated at Tyr-717 by ABL1 specifically in response to oxidative stress; requires prior phosphorylation at Ser-706 or/and Ser-710. In terms of tissue distribution, widely expressed.

The protein resides in the cytoplasm. Its subcellular location is the cell membrane. The protein localises to the nucleus. It is found in the golgi apparatus. It localises to the trans-Golgi network. The catalysed reaction is L-seryl-[protein] + ATP = O-phospho-L-seryl-[protein] + ADP + H(+). The enzyme catalyses L-threonyl-[protein] + ATP = O-phospho-L-threonyl-[protein] + ADP + H(+). With respect to regulation, activated by DAG and phorbol esters. Phorbol-ester/DAG-type domains bind DAG, mediating translocation to membranes. Autophosphorylation of Ser-710 and phosphorylation of Ser-706 by PKC relieves auto-inhibition by the PH domain. Catalytic activity is further increased by phosphorylation at Tyr-717 in response to oxidative stress. Functionally, serine/threonine-protein kinase that converts transient diacylglycerol (DAG) signals into prolonged physiological effects downstream of PKC, and is involved in the regulation of cell proliferation via MAPK1/3 (ERK1/2) signaling, oxidative stress-induced NF-kappa-B activation, inhibition of HDAC7 transcriptional repression, signaling downstream of T-cell antigen receptor (TCR) and cytokine production, and plays a role in Golgi membrane trafficking, angiogenesis, secretory granule release and cell adhesion. May potentiate mitogenesis induced by the neuropeptide bombesin by mediating an increase in the duration of MAPK1/3 (ERK1/2) signaling, which leads to accumulation of immediate-early gene products including FOS that stimulate cell cycle progression. In response to oxidative stress, is phosphorylated at Tyr-438 and Tyr-717 by ABL1, which leads to the activation of PRKD2 without increasing its catalytic activity, and mediates activation of NF-kappa-B. In response to the activation of the gastrin receptor CCKBR, is phosphorylated at Ser-244 by CSNK1D and CSNK1E, translocates to the nucleus, phosphorylates HDAC7, leading to nuclear export of HDAC7 and inhibition of HDAC7 transcriptional repression of NR4A1/NUR77. Upon TCR stimulation, is activated independently of ZAP70, translocates from the cytoplasm to the nucleus and is required for interleukin-2 (IL2) promoter up-regulation. During adaptive immune responses, is required in peripheral T-lymphocytes for the production of the effector cytokines IL2 and IFNG after TCR engagement and for optimal induction of antibody responses to antigens. In epithelial cells stimulated with lysophosphatidic acid (LPA), is activated through a PKC-dependent pathway and mediates LPA-stimulated interleukin-8 (IL8) secretion via a NF-kappa-B-dependent pathway. During TCR-induced T-cell activation, interacts with and is activated by the tyrosine kinase LCK, which results in the activation of the NFAT transcription factors. In the trans-Golgi network (TGN), regulates the fission of transport vesicles that are on their way to the plasma membrane and in polarized cells is involved in the transport of proteins from the TGN to the basolateral membrane. Plays an important role in endothelial cell proliferation and migration prior to angiogenesis, partly through modulation of the expression of KDR/VEGFR2 and FGFR1, two key growth factor receptors involved in angiogenesis. In secretory pathway, is required for the release of chromogranin-A (CHGA)-containing secretory granules from the TGN. Downstream of PRKCA, plays important roles in angiotensin-2-induced monocyte adhesion to endothelial cells. Plays a regulatory role in angiogenesis and tumor growth by phosphorylating a downstream mediator CIB1 isoform 2, resulting in vascular endothelial growth factor A (VEGFA) secretion. In Homo sapiens (Human), this protein is Serine/threonine-protein kinase D2 (PRKD2).